The chain runs to 328 residues: Beta-ketoacyl-[acyl-carrier-protein] synthase III (328 aa).

Residues C122 and H255 contribute to the active site. The tract at residues 256–260 (QANVR) is ACP-binding. Residue N285 is part of the active site.

Belongs to the thiolase-like superfamily. FabH family. Homodimer.

The protein localises to the cytoplasm. The enzyme catalyses malonyl-[ACP] + acetyl-CoA + H(+) = 3-oxobutanoyl-[ACP] + CO2 + CoA. It participates in lipid metabolism; fatty acid biosynthesis. In terms of biological role, catalyzes the condensation reaction of fatty acid synthesis by the addition to an acyl acceptor of two carbons from malonyl-ACP. Catalyzes the first condensation reaction which initiates fatty acid synthesis and may therefore play a role in governing the total rate of fatty acid production. Possesses both acetoacetyl-ACP synthase and acetyl transacylase activities. Its substrate specificity determines the biosynthesis of branched-chain and/or straight-chain of fatty acids. This Bordetella avium (strain 197N) protein is Beta-ketoacyl-[acyl-carrier-protein] synthase III.